We begin with the raw amino-acid sequence, 102 residues long: Small ribosomal subunit protein uS10 (102 aa).

The protein belongs to the universal ribosomal protein uS10 family. In terms of assembly, part of the 30S ribosomal subunit.

In terms of biological role, involved in the binding of tRNA to the ribosomes. In Chloroflexus aurantiacus (strain ATCC 29366 / DSM 635 / J-10-fl), this protein is Small ribosomal subunit protein uS10.